The primary structure comprises 201 residues: Holliday junction branch migration complex subunit RuvA (201 aa).

Residues 1 to 64 (MIGRLRGTLA…EDAQLLYGFA (64 aa)) form a domain I region. Residues 65-143 (EKRERELFRE…AWESMPAIAT (79 aa)) form a domain II region. Residues 144 to 152 (LVVEPGSKT) form a flexible linker region. Residues 153-201 (AVTSAENDAVSALISLGFKPQEASRAVSAIQEENLSSEEMIRRALKGMV) are domain III.

This sequence belongs to the RuvA family. Homotetramer. Forms an RuvA(8)-RuvB(12)-Holliday junction (HJ) complex. HJ DNA is sandwiched between 2 RuvA tetramers; dsDNA enters through RuvA and exits via RuvB. An RuvB hexamer assembles on each DNA strand where it exits the tetramer. Each RuvB hexamer is contacted by two RuvA subunits (via domain III) on 2 adjacent RuvB subunits; this complex drives branch migration. In the full resolvosome a probable DNA-RuvA(4)-RuvB(12)-RuvC(2) complex forms which resolves the HJ.

It is found in the cytoplasm. The RuvA-RuvB-RuvC complex processes Holliday junction (HJ) DNA during genetic recombination and DNA repair, while the RuvA-RuvB complex plays an important role in the rescue of blocked DNA replication forks via replication fork reversal (RFR). RuvA specifically binds to HJ cruciform DNA, conferring on it an open structure. The RuvB hexamer acts as an ATP-dependent pump, pulling dsDNA into and through the RuvAB complex. HJ branch migration allows RuvC to scan DNA until it finds its consensus sequence, where it cleaves and resolves the cruciform DNA. This is Holliday junction branch migration complex subunit RuvA from Stutzerimonas stutzeri (strain A1501) (Pseudomonas stutzeri).